A 490-amino-acid polypeptide reads, in one-letter code: Ribulose bisphosphate carboxylase large chain (490 aa).

Substrate is bound by residues N127 and T177. Residue K179 is the Proton acceptor of the active site. A substrate-binding site is contributed by K181. Mg(2+) is bound by residues K205, D207, and E208. Residue K205 is modified to N6-carboxylysine. H297 functions as the Proton acceptor in the catalytic mechanism. Positions 298, 330, and 382 each coordinate substrate.

This sequence belongs to the RuBisCO large chain family. Type I subfamily. As to quaternary structure, heterohexadecamer of 8 large chains and 8 small chains. Mg(2+) serves as cofactor.

It localises to the plastid. It is found in the chloroplast. The catalysed reaction is 2 (2R)-3-phosphoglycerate + 2 H(+) = D-ribulose 1,5-bisphosphate + CO2 + H2O. It catalyses the reaction D-ribulose 1,5-bisphosphate + O2 = 2-phosphoglycolate + (2R)-3-phosphoglycerate + 2 H(+). In terms of biological role, ruBisCO catalyzes two reactions: the carboxylation of D-ribulose 1,5-bisphosphate, the primary event in carbon dioxide fixation, as well as the oxidative fragmentation of the pentose substrate in the photorespiration process. Both reactions occur simultaneously and in competition at the same active site. This Trieres chinensis (Marine centric diatom) protein is Ribulose bisphosphate carboxylase large chain.